A 630-amino-acid polypeptide reads, in one-letter code: YTH domain-containing family protein 1 (630 aa).

Disordered stretches follow at residues 38–113, 160–183, and 200–241; these read DMTQ…YMQQ, YYPQ…AGPY, and QVGD…QSGH. The segment covering 70 to 102 has biased composition (polar residues); that stretch reads PGQQQQHQYGSPPNTNGNAQPMPQAHGNNTMNS. Residues 382–590 form the YTH domain; it reads EKYFILKSLT…SVGRKLTGLF (209 aa).

Belongs to the YTHDF family. YTHDF1 subfamily.

The protein resides in the cytoplasm. It localises to the P-body. Its function is as follows. Specifically recognizes and binds N6-methyladenosine (m6A)-containing mRNAs, and regulates their stability. M6A is a modification present at internal sites of mRNAs and some non-coding RNAs and plays a role in mRNA stability and processing. Plays a role in pathogenicity towards plant host. The polypeptide is YTH domain-containing family protein 1 (Pyricularia oryzae (strain 70-15 / ATCC MYA-4617 / FGSC 8958) (Rice blast fungus)).